Here is a 673-residue protein sequence, read N- to C-terminus: Probable lysophospholipase 4 (673 aa).

Positions 1–19 are cleaved as a signal peptide; sequence MYVNYIGLFAFVQISLTLA. 13 N-linked (GlcNAc...) asparagine glycosylation sites follow: asparagine 72, asparagine 125, asparagine 191, asparagine 194, asparagine 272, asparagine 301, asparagine 374, asparagine 404, asparagine 409, asparagine 481, asparagine 516, asparagine 545, and asparagine 574. The PLA2c domain occupies 74 to 615; that stretch reads TCSNDNLLRP…QEYCWDGTLA (542 aa). The tract at residues 631–653 is disordered; the sequence is TTSRAPSGTTSGTASSTTSSSVA.

This sequence belongs to the lysophospholipase family.

It is found in the secreted. The catalysed reaction is a 1-acyl-sn-glycero-3-phosphocholine + H2O = sn-glycerol 3-phosphocholine + a fatty acid + H(+). Functionally, catalyzes the release of fatty acids from lysophospholipids. The chain is Probable lysophospholipase 4 (plb4) from Schizosaccharomyces pombe (strain 972 / ATCC 24843) (Fission yeast).